The primary structure comprises 273 residues: Nucleotide-binding protein TTHA0319 (273 aa).

8 to 15 (GLSGAGKT) provides a ligand contact to ATP. 57–60 (DARA) provides a ligand contact to GTP.

This sequence belongs to the RapZ-like family.

Functionally, displays ATPase and GTPase activities. This Thermus thermophilus (strain ATCC 27634 / DSM 579 / HB8) protein is Nucleotide-binding protein TTHA0319.